Reading from the N-terminus, the 318-residue chain is NADH-ubiquinone oxidoreductase chain 1 (318 aa).

Helical transmembrane passes span 3-23 (TMNL…LTLV), 69-89 (ILYI…WTPL), 98-118 (FNLG…SILW), 135-155 (AVAQ…SILL), 171-191 (HLWL…STLA), 217-237 (AGPF…MNAL), 253-273 (ELFT…FLWI), and 294-314 (LPLT…ISSI).

It belongs to the complex I subunit 1 family. Core subunit of respiratory chain NADH dehydrogenase (Complex I) which is composed of 45 different subunits.

The protein resides in the mitochondrion inner membrane. It carries out the reaction a ubiquinone + NADH + 5 H(+)(in) = a ubiquinol + NAD(+) + 4 H(+)(out). In terms of biological role, core subunit of the mitochondrial membrane respiratory chain NADH dehydrogenase (Complex I) which catalyzes electron transfer from NADH through the respiratory chain, using ubiquinone as an electron acceptor. Essential for the catalytic activity and assembly of complex I. The polypeptide is NADH-ubiquinone oxidoreductase chain 1 (MT-ND1) (Papio hamadryas (Hamadryas baboon)).